The primary structure comprises 860 residues: MMIPSQSCFCFFFMVSFFLHTLASPTLRHCRHDQRNALLEFKHEFPRVNESNQIPYDVSLSSWNKSIDCCSWEGVTCDAISSEVISLNLSHVPLNNSLKPNSGLFKLQHLHNLTLSNCSLYGDIPSSLGNLFRLTLLDLSYNYLVGQVPPSIGNLSRLTILDLWDNKLVGQLPASIGNLTQLEYLIFSHNKFSGNIPVTFSNLTKLLVVNLYNNSFESMLPLDMSGFQNLDYFNVGENSFSGTLPKSLFTIPSLRWANLEGNMFKGPIEFRNMYSPSTRLQYLFLSQNKFDGPIPDTLSQYLNLIELDLSFNNLTGSFPTFLFTIPTLERVNLEGNHLKGPVEFGNMSSSSSLKFLNFAQNEFNGSIPESVSQYLNLEELHLSFNNFIGTIPRSISKLAKLEYFCLEDNNMVGEVPSWLWRLTMVALSNNSFNSFGESSEGLDETQVQWLDLSSNSFQGPFPHWICKLRSLEILIMSDNRFNGSIPPCLSSFMVSLTDLILRNNSLSGPLPDIFVNATKLLSLDVSRNKLDGVLPKSLIHCKAMQLLNVRSNKIKDKFPSWLGSLPSLHVLILRSNEFYGTLYQPHASIGFQSLRVIDVSHNDLIGTLPSFYFSSWREMSRLTGEDGDFRLSEAPYMGKVLNATAFFVDSMEIVNKGVETEFKRINEENKVINFSGNRFSGNIPESIGLLKELRHLNLSSNAFTGNIPQSLANLMKLEALDLSLNQLSGQIPQGLGSLSFMSTMNFSYNFLEGPVPKSTQFQGQNCSAFMENPKLNGLEEICRETDRVPNPKPQESKDLSEPEEHVINWIAAGIAYGPGVVCGLVIGHIFLSHKHECWFMEKFRRKKPKVVTRIARPSKH.

Residues 1-23 (MMIPSQSCFCFFFMVSFFLHTLA) form the signal peptide. Residues 24 to 809 (SPTLRHCRHD…SEPEEHVINW (786 aa)) lie on the Extracellular side of the membrane. Asparagine 49, asparagine 64, asparagine 88, asparagine 95, asparagine 112, asparagine 117, asparagine 154, asparagine 178, asparagine 202, and asparagine 213 each carry an N-linked (GlcNAc...) asparagine glycan. 6 LRR repeats span residues 108–131 (QHLH…LGNL), 132–155 (FRLT…IGNL), 156–179 (SRLT…IGNL), 181–202 (QLEY…TFSN), 203–226 (LTKL…DMSG), and 227–251 (FQNL…LFTI). One copy of the LRR 7; degenerate repeat lies at 252–276 (PSLRWANLEGNMFKGPIEFRNMYSP). LRR repeat units follow at residues 277–301 (STRL…LSQY), 302–325 (LNLI…LFTI), 326–349 (PTLE…NMSS), 350–374 (SSSL…VSQY), 376–398 (NLEE…ISKL), 400–419 (KLEY…PSWL), 420–444 (WRLT…GLDE), 446–468 (QVQW…ICKL), 469–494 (RSLE…SFMV), 496–517 (LTDL…FVNA), 518–541 (TKLL…LIHC), 543–564 (AMQL…WLGS), 565–591 (LPSL…SIGF), and 592–615 (QSLR…YFSS). 3 N-linked (GlcNAc...) asparagine glycosylation sites follow: asparagine 313, asparagine 346, and asparagine 364. Residue asparagine 429 is glycosylated (N-linked (GlcNAc...) asparagine). N-linked (GlcNAc...) asparagine glycosylation is found at asparagine 482, asparagine 503, and asparagine 516. N-linked (GlcNAc...) asparagine glycosylation is found at asparagine 642, asparagine 673, and asparagine 697. 4 LRR repeats span residues 665-690 (INEE…IGLL), 691-714 (KELR…LANL), 716-738 (KLEA…LGSL), and 740-763 (FMST…QFQG). 2 N-linked (GlcNAc...) asparagine glycosylation sites follow: asparagine 745 and asparagine 765. A helical membrane pass occupies residues 810–830 (IAAGIAYGPGVVCGLVIGHIF). The Cytoplasmic segment spans residues 831–860 (LSHKHECWFMEKFRRKKPKVVTRIARPSKH).

This sequence belongs to the RLP family.

It localises to the cell membrane. In Arabidopsis thaliana (Mouse-ear cress), this protein is Receptor-like protein 31.